Reading from the N-terminus, the 191-residue chain is MNTELKILMAGVDEVGRGPLAGAVVTAAVILKKPIDGLTDSKKLSPKQRNLLAIRIKEEALAFAYGRAEVEEIDQLNIHHATLLAMRRAVEALPIQPDNVVVDGAFTPQLNIPCKAIVQGDSLVPEISAASILAKVLRDEEMVALDKIYPGYGFAEHKGYATPVHKEALMRLGPCRIHRRSYSPVADLISK.

Residues 7–191 (ILMAGVDEVG…YSPVADLISK (185 aa)) form the RNase H type-2 domain. D13, E14, and D103 together coordinate a divalent metal cation.

Belongs to the RNase HII family. The cofactor is Mn(2+). Requires Mg(2+) as cofactor.

It localises to the cytoplasm. It carries out the reaction Endonucleolytic cleavage to 5'-phosphomonoester.. Its function is as follows. Endonuclease that specifically degrades the RNA of RNA-DNA hybrids. This chain is Ribonuclease HII, found in Legionella pneumophila (strain Corby).